The chain runs to 158 residues: Ribosome-binding factor A (158 aa).

The segment at Ala114 to Ala158 is disordered. The segment covering Ser148–Ala158 has biased composition (basic and acidic residues).

Belongs to the RbfA family. Monomer. Binds 30S ribosomal subunits, but not 50S ribosomal subunits or 70S ribosomes.

The protein resides in the cytoplasm. In terms of biological role, one of several proteins that assist in the late maturation steps of the functional core of the 30S ribosomal subunit. Associates with free 30S ribosomal subunits (but not with 30S subunits that are part of 70S ribosomes or polysomes). Required for efficient processing of 16S rRNA. May interact with the 5'-terminal helix region of 16S rRNA. The chain is Ribosome-binding factor A from Streptomyces griseus subsp. griseus (strain JCM 4626 / CBS 651.72 / NBRC 13350 / KCC S-0626 / ISP 5235).